The sequence spans 32 residues: MSDIN-like toxin proprotein a (32 aa).

Residues 1–10 (MSDINATRLP) constitute a propeptide that is removed on maturation. Positions 11–18 (IIGILLPP) form a cross-link, cyclopeptide (Ile-Pro). Positions 19-32 (CIGDDVTLLLTRGE) are excised as a propeptide.

It belongs to the MSDIN fungal toxin family. Post-translationally, processed by the macrocyclase-peptidase enzyme POPB to yield a toxic cyclic octapeptide. POPB first removes 10 residues from the N-terminus. Conformational trapping of the remaining peptide forces the enzyme to release this intermediate rather than proceed to macrocyclization. The enzyme rebinds the remaining peptide in a different conformation and catalyzes macrocyclization of the N-terminal 8 residues.

Probable toxin that belongs to the MSDIN-like toxin family responsible for a large number of food poisoning cases and deaths. The protein is MSDIN-like toxin proprotein a of Amanita phalloides (Death cap).